The chain runs to 84 residues: Putative membrane protein insertion efficiency factor (84 aa).

Belongs to the UPF0161 family.

It localises to the cell inner membrane. In terms of biological role, could be involved in insertion of integral membrane proteins into the membrane. The chain is Putative membrane protein insertion efficiency factor from Shewanella halifaxensis (strain HAW-EB4).